A 480-amino-acid polypeptide reads, in one-letter code: MHTKTIVELYKGLKNKDFSCVELTQYYLSRINQSKLNAFITVTDELALVQAQVADDKIALGNASILTGIPYAHKDIFCTKGVKTSAGSKMLDTFIAPYDATVSQKLNQMNLVMLGKTNMDEFAMGSSNENSFYNAVKNPWNYLKIPGGSSGGSAASVAGGLSCFATGTDTGGSIRQPASLCGITGLKPTYGRISRYGIIAYASSFDQAGIMTKTSQDAAIVLNIMAGFDEKDSTSAEQKVPDYTTNLNNSLQGLIIGLPKEFFLSGLDNEVANNIMFAVKEFESMGAIVKEVSLPNSVYAIPTYYIIASCECSSNLSRLDGVRYGYRSKESKNLEDLYLSSRSEGFGEEVKRRIMIGTYALSTGYYDAYYLKAQKVRRLISNDFKKVFEKVDVIMGPVSPTTAFDLGSVKDPVSMYLADIYTLSVNLAGLPGMSIPVGFAQDLPVGLQLIGNYWSESKLLNIAHQFQLQTDWHLRIPQEC.

Residues lysine 74 and serine 149 each act as charge relay system in the active site. Serine 173 acts as the Acyl-ester intermediate in catalysis.

Belongs to the amidase family. GatA subfamily. As to quaternary structure, heterotrimer of A, B and C subunits.

It carries out the reaction L-glutamyl-tRNA(Gln) + L-glutamine + ATP + H2O = L-glutaminyl-tRNA(Gln) + L-glutamate + ADP + phosphate + H(+). Functionally, allows the formation of correctly charged Gln-tRNA(Gln) through the transamidation of misacylated Glu-tRNA(Gln) in organisms which lack glutaminyl-tRNA synthetase. The reaction takes place in the presence of glutamine and ATP through an activated gamma-phospho-Glu-tRNA(Gln). The polypeptide is Glutamyl-tRNA(Gln) amidotransferase subunit A (Vesicomyosocius okutanii subsp. Calyptogena okutanii (strain HA)).